A 207-amino-acid chain; its full sequence is MGMLEARELLCERDERTLFSGLSFTLNAGEWVQITGSNGAGKTTLLRLLTGLSRPDAGEVLWQGQPLHQVRDSYHQNLLWIGHQPGIKTRLTALENLHFYHRDGDTAQCLEALAQAGLAGFEDIPVNQLSAGQQRRVALARLWLTRATLWILDEPFTAIDVNGVDRLTQRMAQHTEQGGIVILTTHQPLNVAESKIRRISLTQTRAA.

The region spanning 4–207 is the ABC transporter domain; the sequence is LEARELLCER…RISLTQTRAA (204 aa). An ATP-binding site is contributed by 36 to 43; it reads GSNGAGKT.

The protein belongs to the ABC transporter superfamily. CcmA exporter (TC 3.A.1.107) family. The complex is composed of two ATP-binding proteins (CcmA) and two transmembrane proteins (CcmB).

Its subcellular location is the cell inner membrane. It carries out the reaction heme b(in) + ATP + H2O = heme b(out) + ADP + phosphate + H(+). In terms of biological role, part of the ABC transporter complex CcmAB involved in the biogenesis of c-type cytochromes; once thought to export heme, this seems not to be the case, but its exact role is uncertain. Responsible for energy coupling to the transport system. The protein is Cytochrome c biogenesis ATP-binding export protein CcmA of Shigella boydii serotype 4 (strain Sb227).